We begin with the raw amino-acid sequence, 243 residues long: Proteasome subunit beta (243 aa).

Polar residues predominate over residues 1-16 (MRAPQHNSDFSRTVNQ). Positions 1–29 (MRAPQHNSDFSRTVNQLADDPNPYEPEVG) are disordered. A propeptide spans 1 to 48 (MRAPQHNSDFSRTVNQLADDPNPYEPEVGSMPKNEFSRADLDNVNKTG) (removed in mature form; by autocatalysis). T49 acts as the Nucleophile in catalysis.

The protein belongs to the peptidase T1B family. The 20S proteasome core is composed of 14 alpha and 14 beta subunits that assemble into four stacked heptameric rings, resulting in a barrel-shaped structure. The two inner rings, each composed of seven catalytic beta subunits, are sandwiched by two outer rings, each composed of seven alpha subunits. The catalytic chamber with the active sites is on the inside of the barrel. Has a gated structure, the ends of the cylinder being occluded by the N-termini of the alpha-subunits. Is capped at one or both ends by the proteasome regulatory ATPase, PAN.

It localises to the cytoplasm. It carries out the reaction Cleavage of peptide bonds with very broad specificity.. Its activity is regulated as follows. The formation of the proteasomal ATPase PAN-20S proteasome complex, via the docking of the C-termini of PAN into the intersubunit pockets in the alpha-rings, triggers opening of the gate for substrate entry. Interconversion between the open-gate and close-gate conformations leads to a dynamic regulation of the 20S proteasome proteolysis activity. Its function is as follows. Component of the proteasome core, a large protease complex with broad specificity involved in protein degradation. The polypeptide is Proteasome subunit beta (Natrialba magadii (strain ATCC 43099 / DSM 3394 / CCM 3739 / CIP 104546 / IAM 13178 / JCM 8861 / NBRC 102185 / NCIMB 2190 / MS3) (Natronobacterium magadii)).